A 679-amino-acid chain; its full sequence is Kelch-like protein diablo (679 aa).

Positions 1–48 (MGDLPGGGGGAAGGAGAAGGGGGGGNGAAGSSSSGGGASGSGGGGPGS) are enriched in gly residues. The interval 1–84 (MGDLPGGGGG…RLSHTSEKHP (84 aa)) is disordered. Positions 101 to 168 (CDVVLNVGGR…CYTAHIIVEE (68 aa)) constitute a BTB domain. The region spanning 203-305 (CLGIRAFADT…SPKFLVGTVG (103 aa)) is the BACK domain. Kelch repeat units lie at residues 352–398 (VLFA…VLND), 400–446 (LYAV…VLDG), 447–493 (FLYA…VLGG), 495–540 (LYAI…VFNN), 542–587 (IYAV…VVNG), and 588–634 (QLYA…VMRA). The disordered stretch occupies residues 643–679 (CDNNSSNNNNNNYNLKHQQQQPQQQQQQQQQQTQQQL). Residues 645-679 (NNSSNNNNNNYNLKHQQQQPQQQQQQQQQQTQQQL) are compositionally biased toward low complexity.

The protein operates within protein modification; protein ubiquitination. Functionally, probable substrate-specific adapter of an E3 ubiquitin-protein ligase complex which mediates the ubiquitination and subsequent proteasomal degradation of target proteins. May have a role in synapse differentiation and growth. The sequence is that of Kelch-like protein diablo from Drosophila willistoni (Fruit fly).